The primary structure comprises 608 residues: Glutamine--fructose-6-phosphate aminotransferase [isomerizing] (608 aa).

The Nucleophile; for GATase activity role is filled by Cys2. In terms of domain architecture, Glutamine amidotransferase type-2 spans 2–217 (CGIVGYIGDK…DHEIAIIKKD (216 aa)). 2 consecutive SIS domains span residues 285–424 (TKED…KKGT) and 453–598 (VIQK…VDKP). The active-site For Fru-6P isomerization activity is Lys603.

As to quaternary structure, homodimer.

It is found in the cytoplasm. It carries out the reaction D-fructose 6-phosphate + L-glutamine = D-glucosamine 6-phosphate + L-glutamate. Catalyzes the first step in hexosamine metabolism, converting fructose-6P into glucosamine-6P using glutamine as a nitrogen source. The sequence is that of Glutamine--fructose-6-phosphate aminotransferase [isomerizing] from Caldanaerobacter subterraneus subsp. tengcongensis (strain DSM 15242 / JCM 11007 / NBRC 100824 / MB4) (Thermoanaerobacter tengcongensis).